The following is a 61-amino-acid chain: Small ribosomal subunit protein uS14 (61 aa).

Cysteine 24, cysteine 27, cysteine 40, and cysteine 43 together coordinate Zn(2+).

Belongs to the universal ribosomal protein uS14 family. Zinc-binding uS14 subfamily. In terms of assembly, part of the 30S ribosomal subunit. Contacts proteins S3 and S10. It depends on Zn(2+) as a cofactor.

Functionally, binds 16S rRNA, required for the assembly of 30S particles and may also be responsible for determining the conformation of the 16S rRNA at the A site. The sequence is that of Small ribosomal subunit protein uS14 from Thermosipho melanesiensis (strain DSM 12029 / CIP 104789 / BI429).